We begin with the raw amino-acid sequence, 420 residues long: UDP-N-acetylglucosamine 1-carboxyvinyltransferase (420 aa).

22–23 serves as a coordination point for phosphoenolpyruvate; it reads KN. R94 provides a ligand contact to UDP-N-acetyl-alpha-D-glucosamine. The Proton donor role is filled by C118. C118 carries the 2-(S-cysteinyl)pyruvic acid O-phosphothioketal modification. Positions 306 and 328 each coordinate UDP-N-acetyl-alpha-D-glucosamine.

It belongs to the EPSP synthase family. MurA subfamily.

Its subcellular location is the cytoplasm. It catalyses the reaction phosphoenolpyruvate + UDP-N-acetyl-alpha-D-glucosamine = UDP-N-acetyl-3-O-(1-carboxyvinyl)-alpha-D-glucosamine + phosphate. The protein operates within cell wall biogenesis; peptidoglycan biosynthesis. Cell wall formation. Adds enolpyruvyl to UDP-N-acetylglucosamine. This Jannaschia sp. (strain CCS1) protein is UDP-N-acetylglucosamine 1-carboxyvinyltransferase.